A 215-amino-acid polypeptide reads, in one-letter code: Large ribosomal subunit protein uL4 (215 aa).

Residues 46–76 (TAKSKNRAEVSGGGRKPWAQKGGGRARAGSI) are disordered. Residues 56–71 (SGGGRKPWAQKGGGRA) show a composition bias toward gly residues.

Belongs to the universal ribosomal protein uL4 family. In terms of assembly, part of the 50S ribosomal subunit.

Functionally, one of the primary rRNA binding proteins, this protein initially binds near the 5'-end of the 23S rRNA. It is important during the early stages of 50S assembly. It makes multiple contacts with different domains of the 23S rRNA in the assembled 50S subunit and ribosome. Forms part of the polypeptide exit tunnel. The polypeptide is Large ribosomal subunit protein uL4 (Helicobacter pylori (strain HPAG1)).